A 173-amino-acid polypeptide reads, in one-letter code: Ribulose bisphosphate carboxylase small subunit, chloroplastic 2 (173 aa).

The N-terminal 33 residues, 1–33 (VVLSKECAKPLATPKVTLNKRGFATTIATKNRE), are a transit peptide targeting the chloroplast.

The protein belongs to the RuBisCO small chain family. As to quaternary structure, heterohexadecamer of 8 large and 8 small subunits.

Its subcellular location is the plastid. It localises to the chloroplast. Functionally, ruBisCO catalyzes two reactions: the carboxylation of D-ribulose 1,5-bisphosphate, the primary event in carbon dioxide fixation, as well as the oxidative fragmentation of the pentose substrate. Both reactions occur simultaneously and in competition at the same active site. Although the small subunit is not catalytic it is essential for maximal activity. The chain is Ribulose bisphosphate carboxylase small subunit, chloroplastic 2 from Acetabularia acetabulum (Mermaid's wine glass).